A 411-amino-acid chain; its full sequence is Glutamate dehydrogenase 1, mitochondrial (411 aa).

Residues 1–18 (MNALAATSRNFKQAAKLL) constitute a mitochondrion transit peptide. Residue Lys-102 is part of the active site.

This sequence belongs to the Glu/Leu/Phe/Val dehydrogenases family.

The protein localises to the mitochondrion. It carries out the reaction L-glutamate + NAD(+) + H2O = 2-oxoglutarate + NH4(+) + NADH + H(+). It catalyses the reaction L-glutamate + NADP(+) + H2O = 2-oxoglutarate + NH4(+) + NADPH + H(+). In Oryza sativa subsp. indica (Rice), this protein is Glutamate dehydrogenase 1, mitochondrial (GDH1).